A 150-amino-acid chain; its full sequence is Large ribosomal subunit protein bL9 (150 aa).

The protein belongs to the bacterial ribosomal protein bL9 family.

Its function is as follows. Binds to the 23S rRNA. In Corynebacterium kroppenstedtii (strain DSM 44385 / JCM 11950 / CIP 105744 / CCUG 35717), this protein is Large ribosomal subunit protein bL9.